The chain runs to 568 residues: Protein AF-9 (568 aa).

In terms of domain architecture, YEATS spans 1 to 138 (MASSCAVQVK…EDFRRKLLKA (138 aa)). 2 histone H3K9cr binding regions span residues 78–80 (YAG) and 106–108 (LHL). Positions 138 to 475 (AGGDPNRSIH…PPPPLLKTNN (338 aa)) are disordered. A compositionally biased stretch (low complexity) spans 149–190 (SSSSSSSSSSSSSSSSSSSSSSSSSSSSSSSSSSSSSSSSSS). Residues 202-265 (EHKEKPSKDS…PKPMSKEPKP (64 aa)) are compositionally biased toward basic and acidic residues. Phosphoserine is present on residues Ser288 and Ser294. A Nuclear localization signal motif is present at residues 295–300 (AKKRKK). Positions 303–313 (SEALFKSFSSA) are enriched in low complexity. The segment covering 322–349 (ADKKQIKDKSHVKMGKVKIESETSEKKK) has biased composition (basic and acidic residues). Lys339 is covalently cross-linked (Glycyl lysine isopeptide (Lys-Gly) (interchain with G-Cter in SUMO2)). The span at 357 to 368 (DIVDPNDSDVEE) shows a compositional bias: acidic residues. Residues 371 to 395 (SSKSDSEQPSPASSSSSSSSSFTPS) are compositionally biased toward low complexity. Ser412 and Ser419 each carry phosphoserine. Residues 414–429 (DNEEESDEVEDNDNDS) are compositionally biased toward acidic residues. Residues 445–461 (VSLSDGSDSESSSASSP) are compositionally biased toward low complexity. Position 483 is a phosphoserine (Ser483).

In terms of assembly, component of the super elongation complex (SEC), at least composed of EAF1, EAF2, CDK9, MLLT3/AF9, AFF (AFF1 or AFF4), the P-TEFb complex and ELL (ELL, ELL2 or ELL3). Interacts with BCOR. Interacts with CBX8. Interacts with ALKBH4. Enriched in undifferentiated hematopoietic stem cells in fetal liver, cord blood and bone marrow.

The protein resides in the nucleus. It localises to the chromosome. With respect to regulation, crotonylated lysine binding is strongly inhibited by the peptide XL-07i, carrying a 2-furancarbonyl side chain and capped with a hydrophobic carboxybenzyl group. XL-07i targets the unique pi-pi-pi stacking interaction at the crotonylation recognition site. Chromatin reader component of the super elongation complex (SEC), a complex required to increase the catalytic rate of RNA polymerase II transcription by suppressing transient pausing by the polymerase at multiple sites along the DNA. Specifically recognizes and binds acylated histone H3, with a preference for histone H3 that is crotonylated. Crotonylation marks active promoters and enhancers and confers resistance to transcriptional repressors. Recognizes and binds histone H3 crotonylated at 'Lys-9' (H3K9cr), and with slightly lower affinity histone H3 crotonylated at 'Lys-18' (H3K18cr). Also recognizes and binds histone H3 acetylated and butyrylated at 'Lys-9' (H3K9ac and H3K9bu, respectively), but with lower affinity than crotonylated histone H3. In the SEC complex, MLLT3 is required to recruit the complex to crotonylated histones. Recruitment of the SEC complex to crotonylated histones promotes recruitment of DOT1L on active chromatin to deposit histone H3 'Lys-79' methylation (H3K79me). Plays a key role in hematopoietic stem cell (HSC) maintenance by preserving, rather than conferring, HSC stemness. Acts by binding to the transcription start site of active genes in HSCs and sustaining level of H3K79me2, probably by recruiting DOT1L. This is Protein AF-9 from Homo sapiens (Human).